Consider the following 367-residue polypeptide: uncharacterized protein (367 aa).

One can recognise an FAD-binding PCMH-type domain in the interval 1–96 (ITLHRLAELV…LTATLQLQPV (96 aa)).

The protein to M.tuberculosis Rv3790.

This is an uncharacterized protein from Streptomyces coelicolor.